The primary structure comprises 604 residues: Inositol-3-phosphate synthase 1 (604 aa).

Positions 88, 89, 90, 91, 163, 198, 199, 210, 213, 251, 252, 253, 254, 303, 327, 328, 330, 361, 362, 363, 376, 456, 457, 485, and 486 each coordinate NAD(+).

Belongs to the myo-inositol 1-phosphate synthase family. It depends on NAD(+) as a cofactor.

It carries out the reaction D-glucose 6-phosphate = 1D-myo-inositol 3-phosphate. It participates in polyol metabolism; myo-inositol biosynthesis; myo-inositol from D-glucose 6-phosphate: step 1/2. In terms of biological role, key enzyme in myo-inositol biosynthesis pathway that catalyzes the conversion of glucose 6-phosphate to 1-myo-inositol 1-phosphate in a NAD-dependent manner. Rate-limiting enzyme in the synthesis of all inositol-containing compounds. De novo-synthesized myo-inositol is essential for incorporation into GPI (glycosylphosphatidylinositol) glycolipids during intra-erythrocytic development. The protein is Inositol-3-phosphate synthase 1 of Plasmodium falciparum (isolate 3D7).